Reading from the N-terminus, the 429-residue chain is Threonine synthase (429 aa).

Lys107 carries the N6-(pyridoxal phosphate)lysine modification.

Belongs to the threonine synthase family. Pyridoxal 5'-phosphate serves as cofactor.

It catalyses the reaction O-phospho-L-homoserine + H2O = L-threonine + phosphate. It functions in the pathway amino-acid biosynthesis; L-threonine biosynthesis; L-threonine from L-aspartate: step 5/5. Catalyzes the gamma-elimination of phosphate from L-phosphohomoserine and the beta-addition of water to produce L-threonine. The protein is Threonine synthase (thrC) of Serratia marcescens.